We begin with the raw amino-acid sequence, 382 residues long: S-adenosylmethionine synthase (382 aa).

Position 16 (H16) interacts with ATP. A Mg(2+)-binding site is contributed by D18. A K(+)-binding site is contributed by E44. Residues E57 and Q100 each coordinate L-methionine. A flexible loop region spans residues 100 to 110 (QSPDIAQGVDN). ATP-binding positions include 165–167 (DAK), 231–232 (RF), D240, 246–247 (RK), and K267. Residue D240 coordinates L-methionine. K271 provides a ligand contact to L-methionine.

It belongs to the AdoMet synthase family. In terms of assembly, homotetramer; dimer of dimers. The cofactor is Mg(2+). It depends on K(+) as a cofactor.

Its subcellular location is the cytoplasm. It catalyses the reaction L-methionine + ATP + H2O = S-adenosyl-L-methionine + phosphate + diphosphate. Its pathway is amino-acid biosynthesis; S-adenosyl-L-methionine biosynthesis; S-adenosyl-L-methionine from L-methionine: step 1/1. Catalyzes the formation of S-adenosylmethionine (AdoMet) from methionine and ATP. The overall synthetic reaction is composed of two sequential steps, AdoMet formation and the subsequent tripolyphosphate hydrolysis which occurs prior to release of AdoMet from the enzyme. The sequence is that of S-adenosylmethionine synthase from Legionella pneumophila (strain Lens).